A 290-amino-acid chain; its full sequence is MRIADYSVTRAVLDRHGFTFKKSFGQNFLTDTNILQKIVDTAEIDRSVNVIEIGPGIGALTEFLAENAAEVMAFEIDDRLIPILADTLRDFDNVQVINQDILKSDLQSQIKQFKNPDLPLKVVANLPYYITTPILMHLIESKIPFQEFVVMMQREVADRISAEPNTKAYGSLSIAVQYYMTAKVAFIVPKTVFVPAPNVDSAILKMVRRPEPLIEVTDEDFFFRVAKVGFIHRRKTLWNNLTSHFGKTEEIKTKLTQALELADIKPSIRGEALTIPQYGKLADALKEVGF.

Positions 27, 29, 54, 75, 100, and 125 each coordinate S-adenosyl-L-methionine.

The protein belongs to the class I-like SAM-binding methyltransferase superfamily. rRNA adenine N(6)-methyltransferase family. RsmA subfamily.

It localises to the cytoplasm. It carries out the reaction adenosine(1518)/adenosine(1519) in 16S rRNA + 4 S-adenosyl-L-methionine = N(6)-dimethyladenosine(1518)/N(6)-dimethyladenosine(1519) in 16S rRNA + 4 S-adenosyl-L-homocysteine + 4 H(+). Specifically dimethylates two adjacent adenosines (A1518 and A1519) in the loop of a conserved hairpin near the 3'-end of 16S rRNA in the 30S particle. May play a critical role in biogenesis of 30S subunits. The chain is Ribosomal RNA small subunit methyltransferase A from Streptococcus uberis (strain ATCC BAA-854 / 0140J).